The following is a 101-amino-acid chain: Small ribosomal subunit protein uS14 (101 aa).

It belongs to the universal ribosomal protein uS14 family. In terms of assembly, part of the 30S ribosomal subunit. Contacts proteins S3 and S10.

Functionally, binds 16S rRNA, required for the assembly of 30S particles and may also be responsible for determining the conformation of the 16S rRNA at the A site. The polypeptide is Small ribosomal subunit protein uS14 (Leptothrix cholodnii (strain ATCC 51168 / LMG 8142 / SP-6) (Leptothrix discophora (strain SP-6))).